Here is a 280-residue protein sequence, read N- to C-terminus: Formamidopyrimidine-DNA glycosylase (280 aa).

P2 (schiff-base intermediate with DNA) is an active-site residue. The active-site Proton donor is E3. K60 acts as the Proton donor; for beta-elimination activity in catalysis. DNA-binding residues include H93 and R112. Residues 240-274 (YVYGQHSKPCRVCGADIIKIKVGGRGTHLCPTCQP) form an FPG-type zinc finger. R264 serves as the catalytic Proton donor; for delta-elimination activity.

The protein belongs to the FPG family. Monomer. The cofactor is Zn(2+).

The catalysed reaction is Hydrolysis of DNA containing ring-opened 7-methylguanine residues, releasing 2,6-diamino-4-hydroxy-5-(N-methyl)formamidopyrimidine.. The enzyme catalyses 2'-deoxyribonucleotide-(2'-deoxyribose 5'-phosphate)-2'-deoxyribonucleotide-DNA = a 3'-end 2'-deoxyribonucleotide-(2,3-dehydro-2,3-deoxyribose 5'-phosphate)-DNA + a 5'-end 5'-phospho-2'-deoxyribonucleoside-DNA + H(+). Involved in base excision repair of DNA damaged by oxidation or by mutagenic agents. Acts as a DNA glycosylase that recognizes and removes damaged bases. Has a preference for oxidized purines, such as 7,8-dihydro-8-oxoguanine (8-oxoG). Has AP (apurinic/apyrimidinic) lyase activity and introduces nicks in the DNA strand. Cleaves the DNA backbone by beta-delta elimination to generate a single-strand break at the site of the removed base with both 3'- and 5'-phosphates. The sequence is that of Formamidopyrimidine-DNA glycosylase from Oceanobacillus iheyensis (strain DSM 14371 / CIP 107618 / JCM 11309 / KCTC 3954 / HTE831).